Here is a 399-residue protein sequence, read N- to C-terminus: S-adenosylmethionine synthase (399 aa).

H16 is an ATP binding site. D18 contributes to the Mg(2+) binding site. A K(+)-binding site is contributed by E44. The L-methionine site is built by E57 and Q100. Residues 100 to 110 are flexible loop; that stretch reads QSPDIAQGVDT. ATP-binding positions include 175-177, 246-247, D255, 261-262, A278, and K282; these read DGK, KF, and RK. Residue D255 participates in L-methionine binding. An L-methionine-binding site is contributed by K286. Residue K341 forms an Isoglutamyl lysine isopeptide (Lys-Gln) (interchain with Q-Cter in protein Pup) linkage.

It belongs to the AdoMet synthase family. In terms of assembly, homotetramer; dimer of dimers. It depends on Mg(2+) as a cofactor. K(+) is required as a cofactor.

It localises to the cytoplasm. It catalyses the reaction L-methionine + ATP + H2O = S-adenosyl-L-methionine + phosphate + diphosphate. It functions in the pathway amino-acid biosynthesis; S-adenosyl-L-methionine biosynthesis; S-adenosyl-L-methionine from L-methionine: step 1/1. Its function is as follows. Catalyzes the formation of S-adenosylmethionine (AdoMet) from methionine and ATP. The overall synthetic reaction is composed of two sequential steps, AdoMet formation and the subsequent tripolyphosphate hydrolysis which occurs prior to release of AdoMet from the enzyme. The chain is S-adenosylmethionine synthase from Mycolicibacterium smegmatis (strain ATCC 700084 / mc(2)155) (Mycobacterium smegmatis).